Reading from the N-terminus, the 245-residue chain is Endo-chitosanase (245 aa).

The signal sequence occupies residues Met-1 to Ala-17.

This sequence belongs to the glycosyl hydrolase 75 family.

It localises to the secreted. It carries out the reaction Endohydrolysis of beta-(1-&gt;4)-linkages between D-glucosamine residues in a partly acetylated chitosan.. In terms of biological role, chitosanase catalyzing the endo-type cleavage of chitosan, the deacylated form of chitin. Chitosanase may be crucial in the degradation of the deacetylated portion of chitin in the fungal cell wall. Chitoolisaccharides produced by the hydrolysis of partially N-acetylated chitosan are known to have many biological activities, including antibacterial activity, immune-enhancing effects, and elicitor activity. The sequence is that of Endo-chitosanase (csn) from Aspergillus oryzae (strain ATCC 42149 / RIB 40) (Yellow koji mold).